The chain runs to 450 residues: Tubulin beta-6 chain (450 aa).

8 residues coordinate GTP: glutamine 11, glutamate 71, serine 140, glycine 144, threonine 145, glycine 146, asparagine 206, and asparagine 228. Glutamate 71 is a Mg(2+) binding site. The disordered stretch occupies residues 429–450 (DATVEDEEEYEGEEGLDENYET). The span at 431–450 (TVEDEEEYEGEEGLDENYET) shows a compositional bias: acidic residues.

It belongs to the tubulin family. As to quaternary structure, dimer of alpha and beta chains. A typical microtubule is a hollow water-filled tube with an outer diameter of 25 nm and an inner diameter of 15 nM. Alpha-beta heterodimers associate head-to-tail to form protofilaments running lengthwise along the microtubule wall with the beta-tubulin subunit facing the microtubule plus end conferring a structural polarity. Microtubules usually have 13 protofilaments but different protofilament numbers can be found in some organisms and specialized cells. Requires Mg(2+) as cofactor.

Its subcellular location is the cytoplasm. The protein resides in the cytoskeleton. Its function is as follows. Tubulin is the major constituent of microtubules, a cylinder consisting of laterally associated linear protofilaments composed of alpha- and beta-tubulin heterodimers. Microtubules grow by the addition of GTP-tubulin dimers to the microtubule end, where a stabilizing cap forms. Below the cap, tubulin dimers are in GDP-bound state, owing to GTPase activity of alpha-tubulin. This chain is Tubulin beta-6 chain, found in Gossypium hirsutum (Upland cotton).